A 104-amino-acid polypeptide reads, in one-letter code: L-rhamnose mutarotase (104 aa).

Tyr18 provides a ligand contact to substrate. His22 acts as the Proton donor in catalysis. Substrate is bound by residues Tyr41 and 76 to 77; that span reads WW.

The protein belongs to the rhamnose mutarotase family. In terms of assembly, homodimer.

It localises to the cytoplasm. The catalysed reaction is alpha-L-rhamnose = beta-L-rhamnose. It participates in carbohydrate metabolism; L-rhamnose metabolism. Involved in the anomeric conversion of L-rhamnose. The chain is L-rhamnose mutarotase from Lachnoclostridium phytofermentans (strain ATCC 700394 / DSM 18823 / ISDg) (Clostridium phytofermentans).